A 500-amino-acid polypeptide reads, in one-letter code: NAD(P)H-quinone oxidoreductase chain 4, chloroplastic (500 aa).

A run of 14 helical transmembrane segments spans residues 4–24 (FPWLTIIVVFPISAGSLMLFL), 35–55 (YTICICILELLITTYAFCYNF), 87–107 (IGTILLTGFITTLATLAAFPV), 113–130 (LFHFLMLAMYSGQIGSFS), 134–154 (LLLFFIMWELELIPVYLLLSM), 167–187 (FILYTAGSSIFLLIGVLGISL), 211–231 (ILFYIGFVIALTVKSPIIPLH), 242–262 (HYSTCMLLAGILLKMGAYGLV), 272–292 (AHSLFSPWLMAVGTIQIIYAA), 305–325 (IAYSSVSHMGFIIIGIGSITD), 330–350 (GAILQIISHGFIGAALFFLAG), 386–406 (LALPGMSGFVAELIVFFGIIT), 416–436 (ILIIFVMAIGIILTPIYLLSM), and 462–482 (LFLSISILLPIIGIGIYPDFV).

This sequence belongs to the complex I subunit 4 family.

It localises to the plastid. It is found in the chloroplast thylakoid membrane. It catalyses the reaction a plastoquinone + NADH + (n+1) H(+)(in) = a plastoquinol + NAD(+) + n H(+)(out). The catalysed reaction is a plastoquinone + NADPH + (n+1) H(+)(in) = a plastoquinol + NADP(+) + n H(+)(out). The protein is NAD(P)H-quinone oxidoreductase chain 4, chloroplastic of Draba nemorosa (Woodland whitlowgrass).